The primary structure comprises 137 residues: MASERVQKILEELKALSLLEASELVKAIEEAFGVSAAAPAGGMVMAAPVAAAAAPAPAAAPEPVEEQTAFDVILEAVPADKKIAVLKVVRELTGLGLKDAKDLVEAAPKPVKEGIPKEEANEIKKKLEEAGATVKVK.

Belongs to the bacterial ribosomal protein bL12 family. Homodimer. Part of the ribosomal stalk of the 50S ribosomal subunit. Forms a multimeric L10(L12)X complex, where L10 forms an elongated spine to which 2 to 4 L12 dimers bind in a sequential fashion. Binds GTP-bound translation factors.

Forms part of the ribosomal stalk which helps the ribosome interact with GTP-bound translation factors. Is thus essential for accurate translation. This Synechococcus sp. (strain JA-3-3Ab) (Cyanobacteria bacterium Yellowstone A-Prime) protein is Large ribosomal subunit protein bL12.